Consider the following 1244-residue polypeptide: SWI/SNF chromatin remodeling complex subunit swsn-7 (1244 aa).

Residues 24–116 enclose the ARID domain; sequence QRKMAEFYNS…YLSKFEQVET (93 aa). A compositionally biased stretch (polar residues) spans 486 to 496; it reads FTQGSNQQQNP. 3 disordered regions span residues 486–534, 556–583, and 597–619; these read FTQG…GAAP, NREQ…ILAH, and DRRT…ESQL. The span at 497–508 shows a compositional bias: low complexity; the sequence is HHSQGGHQLGHS. Residues 556 to 566 are compositionally biased toward polar residues; it reads NREQYSTQSSQ. Residues 567–578 are compositionally biased toward pro residues; it reads PHPPHTNVPPSP. Residues 610-619 show a composition bias toward polar residues; the sequence is PSTNSGESQL. Positions 623-697 form a DNA-binding region, RFX-type winged-helix; it reads TEKWIRQNCV…IVAQGIRLIR (75 aa). The segment at 1134 to 1244 is disordered; it reads EEEQQKMLSE…TTPVRAGAGI (111 aa). Residues 1142–1158 are compositionally biased toward low complexity; that stretch reads SEVPSSASLSSMAGSSS. Polar residues-rich tracts occupy residues 1159–1186 and 1194–1212; these read QLPT…SNKP and LNFS…FTAG. Residues 1220 to 1231 are compositionally biased toward low complexity; the sequence is PIQQHIPSQPSP.

In terms of assembly, component of the SWI/SNF-B (PBAF) chromatin remodeling complex.

It localises to the nucleus. In terms of biological role, involved in transcriptional activation and repression of select genes by chromatin remodeling (alteration of DNA-nucleosome topology). Required for the stability of the SWI/SNF chromatin remodeling complex SWI/SNF-B (PBAF). Required for regulation of a stress response gene network, probably as part of the PBAF complex and perhaps acting in concert with histone demethylase jmjc-1. Binds to the ethanol and stress response elements (ESRE) in the promoter regions of hsp-16.1 and hsp-16.2, probably as part of the PBAF complex. This is SWI/SNF chromatin remodeling complex subunit swsn-7 from Caenorhabditis elegans.